Consider the following 284-residue polypeptide: D-tagatose-1,6-bisphosphate aldolase subunit GatY (284 aa).

The active-site Proton donor is the Asp-82. His-83 and His-180 together coordinate Zn(2+). Gly-181 is a binding site for dihydroxyacetone phosphate. Residue His-208 participates in Zn(2+) binding. Dihydroxyacetone phosphate is bound by residues 209–211 and 230–233; these read GAS and NVAT.

This sequence belongs to the class II fructose-bisphosphate aldolase family. TagBP aldolase GatY subfamily. Forms a complex with GatZ. Zn(2+) is required as a cofactor.

The catalysed reaction is D-tagatofuranose 1,6-bisphosphate = D-glyceraldehyde 3-phosphate + dihydroxyacetone phosphate. It participates in carbohydrate metabolism; D-tagatose 6-phosphate degradation; D-glyceraldehyde 3-phosphate and glycerone phosphate from D-tagatose 6-phosphate: step 2/2. Functionally, catalytic subunit of the tagatose-1,6-bisphosphate aldolase GatYZ, which catalyzes the reversible aldol condensation of dihydroxyacetone phosphate (DHAP or glycerone-phosphate) with glyceraldehyde 3-phosphate (G3P) to produce tagatose 1,6-bisphosphate (TBP). Requires GatZ subunit for full activity and stability. Is involved in the catabolism of galactitol. This chain is D-tagatose-1,6-bisphosphate aldolase subunit GatY, found in Salmonella enteritidis PT4 (strain P125109).